The primary structure comprises 690 residues: UvrABC system protein C (690 aa).

Residues 15–94 form the GIY-YIG domain; sequence TDPGVYTFRD…IKRFNPRFNV (80 aa). One can recognise a UVR domain in the interval 207 to 242; sequence EPVLRRVRKEMEQASENLDFERAASLRDQLQAMQKS.

This sequence belongs to the UvrC family. As to quaternary structure, interacts with UvrB in an incision complex.

It localises to the cytoplasm. Functionally, the UvrABC repair system catalyzes the recognition and processing of DNA lesions. UvrC both incises the 5' and 3' sides of the lesion. The N-terminal half is responsible for the 3' incision and the C-terminal half is responsible for the 5' incision. The protein is UvrABC system protein C of Corynebacterium jeikeium (strain K411).